The primary structure comprises 313 residues: Competence protein ComGA (313 aa).

Gly138–Thr145 contacts ATP.

Belongs to the GSP E family.

The protein localises to the cell membrane. Required for uptake of DNA by competent cells. May be involved in assembly of a complex forming a transformation pilus at the surface of competent cells. The sequence is that of Competence protein ComGA from Streptococcus pneumoniae (strain ATCC BAA-255 / R6).